The sequence spans 215 residues: Translation initiation factor 6 (215 aa).

This sequence belongs to the eIF-6 family.

In terms of biological role, binds to the 50S ribosomal subunit and prevents its association with the 30S ribosomal subunit to form the 70S initiation complex. This Archaeoglobus fulgidus (strain ATCC 49558 / DSM 4304 / JCM 9628 / NBRC 100126 / VC-16) protein is Translation initiation factor 6.